A 523-amino-acid polypeptide reads, in one-letter code: Maintenance of mitochondrial morphology protein 1 (523 aa).

Residues 1-43 are Lumenal-facing; it reads MAGSTSASLQTPYFPSSTQINPVRVDHTLPLPPSQPSLSFTQG. A helical membrane pass occupies residues 44–64; that stretch reads LLVGQLSVVLLIGAFIKFFIF. Residues 65 to 523 are Cytoplasmic-facing; that stretch reads GEAPPPPSRG…GSMPDTVTET (459 aa). Disordered stretches follow at residues 70-118, 128-147, 295-349, 420-474, and 492-523; these read PPSR…SSST, YYSATPTHPTPKHGRPRLYH, TSDQ…SKHG, RTGL…DRGL, and GGHQNQSGRDGGRGGNEQFAMPGSMPDTVTET. Polar residues-rich tracts occupy residues 74-96 and 105-118; these read GLSNRTSTHPRSYSINAASTDSS and STSNILRPVPSSST. A compositionally biased stretch (basic residues) spans 137 to 147; it reads TPKHGRPRLYH. In terms of domain architecture, SMP-LTD spans 151 to 412; the sequence is QPESLDWFNV…EPRVQVVGLP (262 aa). The span at 295–312 shows a compositional bias: polar residues; that stretch reads TSDQTMSPIPTPHDTTSE. Positions 449–468 are enriched in gly residues; sequence GVSGGGGSGGGSGGGGGGMR.

The protein belongs to the MMM1 family. As to quaternary structure, homodimer. Component of the ER-mitochondria encounter structure (ERMES) or MDM complex, composed of MMM1, MDM10, MDM12 and MDM34. An MMM1 homodimer associates with one molecule of MDM12 on each side in a pairwise head-to-tail manner, and the SMP-LTD domains of MMM1 and MDM12 generate a continuous hydrophobic tunnel for phospholipid trafficking.

It is found in the endoplasmic reticulum membrane. Functionally, component of the ERMES/MDM complex, which serves as a molecular tether to connect the endoplasmic reticulum (ER) and mitochondria. Components of this complex are involved in the control of mitochondrial shape and protein biogenesis, and function in nonvesicular lipid trafficking between the ER and mitochondria. The MDM12-MMM1 subcomplex functions in the major beta-barrel assembly pathway that is responsible for biogenesis of all outer membrane beta-barrel proteins, and acts in a late step after the SAM complex. The MDM10-MDM12-MMM1 subcomplex further acts in the TOM40-specific pathway after the action of the MDM12-MMM1 complex. Essential for establishing and maintaining the structure of mitochondria and maintenance of mtDNA nucleoids. This Paracoccidioides lutzii (strain ATCC MYA-826 / Pb01) (Paracoccidioides brasiliensis) protein is Maintenance of mitochondrial morphology protein 1.